Reading from the N-terminus, the 369-residue chain is Caffeine synthase 1 (369 aa).

Residue tyrosine 24 participates in S-adenosyl-L-homocysteine binding. Threonine 31 is a caffeine binding site. Residues cysteine 66, asparagine 71, aspartate 103, leucine 104, serine 138, and phenylalanine 139 each contribute to the S-adenosyl-L-homocysteine site. The caffeine site is built by tyrosine 156, histidine 159, and tryptophan 160. Position 177 (asparagine 177) interacts with Mg(2+). Arginine 225 is a binding site for caffeine. Residues aspartate 263, phenylalanine 265, and asparagine 266 each coordinate Mg(2+). Phenylalanine 321 lines the caffeine pocket.

This sequence belongs to the methyltransferase superfamily. Type-7 methyltransferase family. Requires Mg(2+) as cofactor.

The enzyme catalyses theobromine + S-adenosyl-L-methionine = caffeine + S-adenosyl-L-homocysteine + H(+). The catalysed reaction is 7-methylxanthine + S-adenosyl-L-methionine = theobromine + S-adenosyl-L-homocysteine + H(+). The protein operates within alkaloid biosynthesis. Functionally, involved in the biosynthesis of caffeine. Catalyzes the conversion of 7-methylxanthine (7mX) to theobromine and of theobromine to caffeine. The protein is Caffeine synthase 1 of Camellia taliensis (Wild tea).